The sequence spans 562 residues: Chaperonin GroEL 1 (562 aa).

Residues 30-33, K51, 87-91, G415, 478-480, and D494 contribute to the ATP site; these read TLGP, DGTTT, and NAA.

It belongs to the chaperonin (HSP60) family. As to quaternary structure, forms a cylinder of 14 subunits composed of two heptameric rings stacked back-to-back. Interacts with the co-chaperonin GroES.

It localises to the cytoplasm. The enzyme catalyses ATP + H2O + a folded polypeptide = ADP + phosphate + an unfolded polypeptide.. Functionally, together with its co-chaperonin GroES, plays an essential role in assisting protein folding. The GroEL-GroES system forms a nano-cage that allows encapsulation of the non-native substrate proteins and provides a physical environment optimized to promote and accelerate protein folding. The polypeptide is Chaperonin GroEL 1 (Sorangium cellulosum (strain So ce56) (Polyangium cellulosum (strain So ce56))).